Here is a 282-residue protein sequence, read N- to C-terminus: Ribosomal RNA small subunit methyltransferase A (282 aa).

The disordered stretch occupies residues 1–21; that stretch reads MPDFPKEHATPMSNRPPAHQA. 6 residues coordinate S-adenosyl-L-methionine: N28, L30, G55, E76, D101, and N126.

The protein belongs to the class I-like SAM-binding methyltransferase superfamily. rRNA adenine N(6)-methyltransferase family. RsmA subfamily.

It localises to the cytoplasm. The enzyme catalyses adenosine(1518)/adenosine(1519) in 16S rRNA + 4 S-adenosyl-L-methionine = N(6)-dimethyladenosine(1518)/N(6)-dimethyladenosine(1519) in 16S rRNA + 4 S-adenosyl-L-homocysteine + 4 H(+). Its function is as follows. Specifically dimethylates two adjacent adenosines (A1518 and A1519) in the loop of a conserved hairpin near the 3'-end of 16S rRNA in the 30S particle. May play a critical role in biogenesis of 30S subunits. The protein is Ribosomal RNA small subunit methyltransferase A of Chromohalobacter salexigens (strain ATCC BAA-138 / DSM 3043 / CIP 106854 / NCIMB 13768 / 1H11).